Here is a 451-residue protein sequence, read N- to C-terminus: UPF0210 protein NMCC_1554 (451 aa).

It belongs to the UPF0210 family. Homodimer.

The chain is UPF0210 protein NMCC_1554 from Neisseria meningitidis serogroup C (strain 053442).